Consider the following 199-residue polypeptide: MSRVLIIESSARQQDSVSRQLTKDFIQQWQAAHPADQITVRDLAVSPVPHLDANLLGGWMKPEEQRSAAELEALARSNELTDELLAADVLVMAAPMYNFTIPSTLKAWLDHVLRAGITFKYTPTGPQGLLTGKRAIVLTARGGIHAGASSDHQEPYLRQVMAFIGIHDVDFIHAEGLNMSGEFHEKGVNQAKAKLAAVA.

Residues Ser10, 16 to 18 (SVS), and 96 to 99 (MYNF) each bind FMN.

The protein belongs to the azoreductase type 1 family. As to quaternary structure, homodimer. FMN serves as cofactor.

The enzyme catalyses 2 a quinone + NADH + H(+) = 2 a 1,4-benzosemiquinone + NAD(+). The catalysed reaction is N,N-dimethyl-1,4-phenylenediamine + anthranilate + 2 NAD(+) = 2-(4-dimethylaminophenyl)diazenylbenzoate + 2 NADH + 2 H(+). Functionally, quinone reductase that provides resistance to thiol-specific stress caused by electrophilic quinones. Also exhibits azoreductase activity. Catalyzes the reductive cleavage of the azo bond in aromatic azo compounds to the corresponding amines. The protein is FMN-dependent NADH:quinone oxidoreductase 2 of Pseudomonas putida (strain ATCC 47054 / DSM 6125 / CFBP 8728 / NCIMB 11950 / KT2440).